Reading from the N-terminus, the 273-residue chain is Peptidyl-prolyl cis-trans isomerase E (273 aa).

Residues 1 to 48 (MPMDYQTEKHRGFAFVEFEEVEDAMSAIDNMNESEIFGRTIRVNVARP) form the RRM domain. Positions 77 to 103 (RKLDEPDIVNPSDTSENVEDLSDEEMR) are disordered. In terms of domain architecture, PPIase cyclophilin-type spans 115–271 (FFDIRIGNGD…EPVIISRCGE (157 aa)).

The protein belongs to the cyclophilin-type PPIase family. PPIase E subfamily.

Its subcellular location is the cytoplasm. The catalysed reaction is [protein]-peptidylproline (omega=180) = [protein]-peptidylproline (omega=0). Its activity is regulated as follows. Binds cyclosporin A (CsA). CsA mediates some of its effects via an inhibitory action on PPIase. Its function is as follows. PPIases accelerate the folding of proteins. It catalyzes the cis-trans isomerization of proline imidic peptide bonds in oligopeptides. The protein is Peptidyl-prolyl cis-trans isomerase E of Schistosoma mansoni (Blood fluke).